Here is a 205-residue protein sequence, read N- to C-terminus: Protein N-terminal glutamine amidohydrolase (205 aa).

Catalysis depends on residues C20, H74, and D90.

The protein belongs to the NTAQ1 family. In terms of assembly, monomer.

It carries out the reaction N-terminal L-glutaminyl-[protein] + H2O = N-terminal L-glutamyl-[protein] + NH4(+). Mediates the side-chain deamidation of N-terminal glutamine residues to glutamate, an important step in N-end rule pathway of protein degradation. Conversion of the resulting N-terminal glutamine to glutamate renders the protein susceptible to arginylation, polyubiquitination and degradation as specified by the N-end rule. Does not act on substrates with internal or C-terminal glutamine and does not act on non-glutamine residues in any position. This chain is Protein N-terminal glutamine amidohydrolase (tun), found in Drosophila erecta (Fruit fly).